We begin with the raw amino-acid sequence, 442 residues long: Chitinase-like protein Idgf4 (442 aa).

The signal sequence occupies residues 1 to 21; that stretch reads MKLYALFSLLVGSLAIGQISA. One can recognise a GH18 domain in the interval 25-442; sequence HHLLCYYDGN…PILRQVKSKL (418 aa). C29 and C56 form a disulfide bridge. An N-linked (GlcNAc...) asparagine glycan is attached at N224. C343 and C426 form a disulfide bridge.

The protein belongs to the glycosyl hydrolase 18 family. IDGF subfamily. In terms of processing, glycosylated. In terms of tissue distribution, primarily expressed in yolk cells and fat body. In larvae, it is expressed in the imaginal ring, the salivary duct, large salivary gland cells and weakly expressed in imaginal disks. More strongly expressed than Idgf1 and Idgf3.

Its subcellular location is the secreted. Functionally, cooperates with insulin-like peptides to stimulate the proliferation, polarization and motility of imaginal disk cells. May act by stabilizing the binding of insulin-like peptides to its receptor through a simultaneous interaction with both molecules to form a multiprotein signaling complex. This Drosophila melanogaster (Fruit fly) protein is Chitinase-like protein Idgf4 (Idgf4).